The primary structure comprises 496 residues: Glutamyl-tRNA(Gln) amidotransferase subunit A (496 aa).

Active-site charge relay system residues include K79 and S159. S183 serves as the catalytic Acyl-ester intermediate.

Belongs to the amidase family. GatA subfamily. As to quaternary structure, heterotrimer of A, B and C subunits.

It carries out the reaction L-glutamyl-tRNA(Gln) + L-glutamine + ATP + H2O = L-glutaminyl-tRNA(Gln) + L-glutamate + ADP + phosphate + H(+). In terms of biological role, allows the formation of correctly charged Gln-tRNA(Gln) through the transamidation of misacylated Glu-tRNA(Gln) in organisms which lack glutaminyl-tRNA synthetase. The reaction takes place in the presence of glutamine and ATP through an activated gamma-phospho-Glu-tRNA(Gln). In Bartonella quintana (strain Toulouse) (Rochalimaea quintana), this protein is Glutamyl-tRNA(Gln) amidotransferase subunit A.